The following is a 651-amino-acid chain: UvrABC system protein B (651 aa).

The Helicase ATP-binding domain occupies 25 to 178; sequence RGISCGAKEQ…CQLQERLVEL (154 aa). 38 to 45 contacts ATP; sequence GVTGSGKT. A Beta-hairpin motif is present at residues 91-114; the sequence is YYDYYQPEAYIPQSDVYIEKDALI. The region spanning 427–591 is the Helicase C-terminal domain; that stretch reads DGQIHDVMCE…IVPRTIQKPV (165 aa). Residues 593–615 are disordered; it reads TSLSERVGSSRKKVSRDTNTDPA. One can recognise a UVR domain in the interval 616–651; sequence NRDIVELQKEMLLCAENLDFERAVEIRNEIKRLTAP.

The protein belongs to the UvrB family. Forms a heterotetramer with UvrA during the search for lesions. Interacts with UvrC in an incision complex.

It localises to the cytoplasm. The UvrABC repair system catalyzes the recognition and processing of DNA lesions. A damage recognition complex composed of 2 UvrA and 2 UvrB subunits scans DNA for abnormalities. Upon binding of the UvrA(2)B(2) complex to a putative damaged site, the DNA wraps around one UvrB monomer. DNA wrap is dependent on ATP binding by UvrB and probably causes local melting of the DNA helix, facilitating insertion of UvrB beta-hairpin between the DNA strands. Then UvrB probes one DNA strand for the presence of a lesion. If a lesion is found the UvrA subunits dissociate and the UvrB-DNA preincision complex is formed. This complex is subsequently bound by UvrC and the second UvrB is released. If no lesion is found, the DNA wraps around the other UvrB subunit that will check the other stand for damage. The polypeptide is UvrABC system protein B (Anaplasma marginale (strain Florida)).